The sequence spans 466 residues: 3-isopropylmalate dehydratase large subunit (466 aa).

Cys347, Cys407, and Cys410 together coordinate [4Fe-4S] cluster.

Belongs to the aconitase/IPM isomerase family. LeuC type 1 subfamily. Heterodimer of LeuC and LeuD. Requires [4Fe-4S] cluster as cofactor.

It catalyses the reaction (2R,3S)-3-isopropylmalate = (2S)-2-isopropylmalate. It functions in the pathway amino-acid biosynthesis; L-leucine biosynthesis; L-leucine from 3-methyl-2-oxobutanoate: step 2/4. Catalyzes the isomerization between 2-isopropylmalate and 3-isopropylmalate, via the formation of 2-isopropylmaleate. The polypeptide is 3-isopropylmalate dehydratase large subunit (Escherichia coli O127:H6 (strain E2348/69 / EPEC)).